Reading from the N-terminus, the 459-residue chain is Alcohol acyl transferase 2 (459 aa).

Residues His164 and Asn385 each act as proton acceptor in the active site.

Belongs to the plant acyltransferase family. In terms of tissue distribution, highly expressed in the cortex and skin of ripe fruit.

Its function is as follows. Involved in the biosynthesis of volatile esters which confer ripe apple fruit flavor. Alcohol acyl transferase that can use a wide range of alcohols as substrate to produce esters. The protein is Alcohol acyl transferase 2 of Malus domestica (Apple).